Consider the following 505-residue polypeptide: Maturase K (505 aa).

The protein belongs to the intron maturase 2 family. MatK subfamily.

It is found in the plastid. The protein resides in the chloroplast. Usually encoded in the trnK tRNA gene intron. Probably assists in splicing its own and other chloroplast group II introns. This Cubanola domingensis protein is Maturase K.